Consider the following 362-residue polypeptide: 3-dehydroquinate synthase (362 aa).

Residues 71–76 (DGEQYK), 105–109 (GVIGD), 129–130 (TT), Lys142, Lys151, and 169–172 (CLST) contribute to the NAD(+) site. Zn(2+) is bound by residues Glu184, His247, and His264.

Belongs to the sugar phosphate cyclases superfamily. Dehydroquinate synthase family. The cofactor is Co(2+). Requires Zn(2+) as cofactor. NAD(+) serves as cofactor.

It is found in the cytoplasm. It catalyses the reaction 7-phospho-2-dehydro-3-deoxy-D-arabino-heptonate = 3-dehydroquinate + phosphate. It participates in metabolic intermediate biosynthesis; chorismate biosynthesis; chorismate from D-erythrose 4-phosphate and phosphoenolpyruvate: step 2/7. Its function is as follows. Catalyzes the conversion of 3-deoxy-D-arabino-heptulosonate 7-phosphate (DAHP) to dehydroquinate (DHQ). The chain is 3-dehydroquinate synthase from Vibrio atlanticus (strain LGP32) (Vibrio splendidus (strain Mel32)).